A 137-amino-acid polypeptide reads, in one-letter code: Large-conductance mechanosensitive channel (137 aa).

A run of 2 helical transmembrane segments spans residues Phe10–Gly30 and Gly76–Ile96.

This sequence belongs to the MscL family. In terms of assembly, homopentamer.

It localises to the cell inner membrane. Functionally, channel that opens in response to stretch forces in the membrane lipid bilayer. May participate in the regulation of osmotic pressure changes within the cell. The chain is Large-conductance mechanosensitive channel from Pectobacterium carotovorum subsp. carotovorum (strain PC1).